We begin with the raw amino-acid sequence, 514 residues long: Nucleus accumbens-associated protein 1 (514 aa).

Residues 30 to 94 (CDVSVVVKGH…CYTGRLSMNM (65 aa)) form the BTB domain. Lysine 167 participates in a covalent cross-link: Glycyl lysine isopeptide (Lys-Gly) (interchain with G-Cter in SUMO1); alternate. Lysine 167 is covalently cross-linked (Glycyl lysine isopeptide (Lys-Gly) (interchain with G-Cter in SUMO2); alternate). A Glycyl lysine isopeptide (Lys-Gly) (interchain with G-Cter in SUMO2) cross-link involves residue lysine 182. Disordered regions lie at residues 183–205 (RLWDSSQKEAGGSGGNNGSRKMA) and 242–279 (PSMSERTSPGTSSAYTSDSPSSYHNEEDEEEDAGEEGT). At serine 187 the chain carries Phosphoserine. Positions 242–251 (PSMSERTSPG) are enriched in polar residues. At serine 245 the chain carries Phosphoserine; by PKC. Positions 252–264 (TSSAYTSDSPSSY) are enriched in low complexity. The segment covering 267-279 (EEDEEEDAGEEGT) has biased composition (acidic residues). Residues lysine 304, lysine 438, lysine 466, and lysine 485 each participate in a glycyl lysine isopeptide (Lys-Gly) (interchain with G-Cter in SUMO2) cross-link. The region spanning 360–457 (GTNVYITRAQ…DMCTNARRVV (98 aa)) is the BEN domain. Phosphoserine is present on residues serine 492 and serine 496.

As to quaternary structure, homooligomer; mediated by the BTB domain. Interacts with HDAC3 and HDAC4. Interacts (via BTB domain) with CUL3, PSMD7 and RCOR1. As to expression, ubiquitously expressed with higher expression in the brain, kidney and liver, and at lower levels in heart, lung and testes.

It is found in the nucleus. The protein resides in the cytoplasm. Functions as a transcriptional repressor. Seems to function as a transcriptional corepressor in neuronal cells through recruitment of HDAC3 and HDAC4. Contributes to tumor progression, and tumor cell proliferation and survival. This may be mediated at least in part through repressing transcriptional activity of GADD45GIP1. Required for recruiting the proteasome from the nucleus to the cytoplasm and dendritic spines. Involved in the acute behavioral and neurological responses to cocaine and amphetamines. This chain is Nucleus accumbens-associated protein 1 (Nacc1), found in Mus musculus (Mouse).